The primary structure comprises 344 residues: tRNA N6-adenosine threonylcarbamoyltransferase (344 aa).

2 residues coordinate Fe cation: His111 and His115. Substrate-binding positions include 133-137 (LVSGG), Asp166, Gly179, and Asn283. Position 311 (Asp311) interacts with Fe cation.

It belongs to the KAE1 / TsaD family. The cofactor is Fe(2+).

It localises to the cytoplasm. It catalyses the reaction L-threonylcarbamoyladenylate + adenosine(37) in tRNA = N(6)-L-threonylcarbamoyladenosine(37) in tRNA + AMP + H(+). Required for the formation of a threonylcarbamoyl group on adenosine at position 37 (t(6)A37) in tRNAs that read codons beginning with adenine. Is involved in the transfer of the threonylcarbamoyl moiety of threonylcarbamoyl-AMP (TC-AMP) to the N6 group of A37, together with TsaE and TsaB. TsaD likely plays a direct catalytic role in this reaction. This Orientia tsutsugamushi (strain Boryong) (Rickettsia tsutsugamushi) protein is tRNA N6-adenosine threonylcarbamoyltransferase.